A 573-amino-acid polypeptide reads, in one-letter code: Sulfite reductase [NADPH] hemoprotein beta-component (573 aa).

A disordered region spans residues 1–20 (MAKVELKAPDGPPSDVERIK). [4Fe-4S] cluster contacts are provided by cysteine 438, cysteine 444, cysteine 483, and cysteine 487. Cysteine 487 is a siroheme binding site.

This sequence belongs to the nitrite and sulfite reductase 4Fe-4S domain family. In terms of assembly, alpha(8)-beta(8). The alpha component is a flavoprotein, the beta component is a hemoprotein. It depends on siroheme as a cofactor. [4Fe-4S] cluster is required as a cofactor.

It catalyses the reaction hydrogen sulfide + 3 NADP(+) + 3 H2O = sulfite + 3 NADPH + 4 H(+). The protein operates within sulfur metabolism; hydrogen sulfide biosynthesis; hydrogen sulfide from sulfite (NADPH route): step 1/1. Component of the sulfite reductase complex that catalyzes the 6-electron reduction of sulfite to sulfide. This is one of several activities required for the biosynthesis of L-cysteine from sulfate. The sequence is that of Sulfite reductase [NADPH] hemoprotein beta-component from Geobacillus kaustophilus (strain HTA426).